Reading from the N-terminus, the 517-residue chain is Acetyl-coenzyme A carboxylase carboxyl transferase subunit beta, chloroplastic (517 aa).

Composition is skewed to basic and acidic residues over residues 1–17 (MKPTKPEGPKKPNKSNE), 24–41 (GDNKEDLEGPKKPNKSNE), 48–65 (GDNKEDLEGPKKPNKSNE), and 72–81 (GDKQKDKKDG). 2 disordered regions span residues 1–179 (MKPT…KEEE) and 204–234 (KHRDRKSVPAKERELVPAQSTKRDTDPDSEA). Residues 87–131 (YDDEYEEDLEYDDEYEEDLEYDDEYEEDLEYDDEEYDDEYEEDLE) are compositionally biased toward acidic residues. Composition is skewed to basic and acidic residues over residues 132–179 (GDNK…KEEE) and 209–229 (KSVPAKERELVPAQSTKRDTD). Residues 243-514 (LWVHCKLCSG…NSQVINIYNY (272 aa)) form the CoA carboxyltransferase N-terminal domain. Zn(2+)-binding residues include Cys-247, Cys-250, Cys-266, and Cys-269. The segment at 247–269 (CKLCSGFNYKKILKSKNNVCEQC) adopts a C4-type zinc-finger fold.

The protein belongs to the AccD/PCCB family. Acetyl-CoA carboxylase is a heterohexamer composed of biotin carboxyl carrier protein, biotin carboxylase and 2 subunits each of ACCase subunit alpha and ACCase plastid-coded subunit beta (accD). Zn(2+) is required as a cofactor.

The protein localises to the plastid. The protein resides in the chloroplast stroma. It carries out the reaction N(6)-carboxybiotinyl-L-lysyl-[protein] + acetyl-CoA = N(6)-biotinyl-L-lysyl-[protein] + malonyl-CoA. It functions in the pathway lipid metabolism; malonyl-CoA biosynthesis; malonyl-CoA from acetyl-CoA: step 1/1. Its function is as follows. Component of the acetyl coenzyme A carboxylase (ACC) complex. Biotin carboxylase (BC) catalyzes the carboxylation of biotin on its carrier protein (BCCP) and then the CO(2) group is transferred by the transcarboxylase to acetyl-CoA to form malonyl-CoA. The polypeptide is Acetyl-coenzyme A carboxylase carboxyl transferase subunit beta, chloroplastic (Oenothera elata subsp. hookeri (Hooker's evening primrose)).